The chain runs to 400 residues: Phosphoglycerate kinase (400 aa).

Residues 24–26, R40, 63–66, R121, and R154 contribute to the substrate site; these read DFN and HFGR. Residues K205, G296, E327, and 356 to 359 each bind ATP; that span reads GGDS.

Belongs to the phosphoglycerate kinase family. As to quaternary structure, monomer.

It localises to the cytoplasm. It carries out the reaction (2R)-3-phosphoglycerate + ATP = (2R)-3-phospho-glyceroyl phosphate + ADP. The protein operates within carbohydrate degradation; glycolysis; pyruvate from D-glyceraldehyde 3-phosphate: step 2/5. This Thermosynechococcus vestitus (strain NIES-2133 / IAM M-273 / BP-1) protein is Phosphoglycerate kinase.